The primary structure comprises 177 residues: Non-specific lipid transfer protein GPI-anchored 22 (177 aa).

The first 29 residues, M1–S29, serve as a signal peptide directing secretion. 4 cysteine pairs are disulfide-bonded: C38-C81, C48-C63, C64-C108, and C79-C117. The N-linked (GlcNAc...) asparagine glycan is linked to N113. The GPI-anchor amidated serine moiety is linked to residue S152. Residues S153 to M177 constitute a propeptide, removed in mature form.

The protein belongs to the plant LTP family. As to expression, expressed in seedlings, preferentially in hypocotyls and roots. Also observed in siliques.

It localises to the cell membrane. In terms of biological role, probable lipid transfer protein. This Arabidopsis thaliana (Mouse-ear cress) protein is Non-specific lipid transfer protein GPI-anchored 22.